We begin with the raw amino-acid sequence, 376 residues long: Arsenite methyltransferase (376 aa).

Residues Ser-47 and Ser-336 each carry the phosphoserine modification. Over residues 354-363 the composition is skewed to basic and acidic residues; that stretch reads SDKMKPRHAP. The tract at residues 354 to 376 is disordered; that stretch reads SDKMKPRHAPEGTGGCCGKRKNC.

It belongs to the methyltransferase superfamily. Arsenite methyltransferase family.

The protein localises to the cytoplasm. Its subcellular location is the cytosol. It carries out the reaction arsenic triglutathione + [thioredoxin]-dithiol + S-adenosyl-L-methionine + 2 H2O = methylarsonous acid + [thioredoxin]-disulfide + 3 glutathione + S-adenosyl-L-homocysteine + H(+). It catalyses the reaction arsenic triglutathione + 2 [thioredoxin]-dithiol + 2 S-adenosyl-L-methionine + H2O = dimethylarsinous acid + 2 [thioredoxin]-disulfide + 3 glutathione + 2 S-adenosyl-L-homocysteine + 2 H(+). The enzyme catalyses arsenic triglutathione + 3 [thioredoxin]-dithiol + 3 S-adenosyl-L-methionine = trimethylarsine + 3 [thioredoxin]-disulfide + 3 glutathione + 3 S-adenosyl-L-homocysteine + 3 H(+). Its function is as follows. Catalyzes the transfer of a methyl group from AdoMet to trivalent arsenicals producing methylated and dimethylated arsenicals. It methylates arsenite to form methylarsonate, Me-AsO(3)H(2), which is reduced by methylarsonate reductase to methylarsonite, Me-As(OH)2. Methylarsonite is also a substrate and it is converted into the much less toxic compound dimethylarsinate (cacodylate), Me(2)As(O)-OH. This is Arsenite methyltransferase (As3mt) from Mus musculus (Mouse).